We begin with the raw amino-acid sequence, 132 residues long: MVMTDPIADFLTRIRNGNMRKFDVVEAPASKIKRQIAEILKAEGYVKDVEYVEDNKQGVIRVFLKYGKNGEKVITNLKRISKPGLRVYVKSDDVPKVLNGLGTAIISTSTGVVTDKVARQTNVGGEVIAYIW.

It belongs to the universal ribosomal protein uS8 family. As to quaternary structure, part of the 30S ribosomal subunit. Contacts proteins S5 and S12.

Its function is as follows. One of the primary rRNA binding proteins, it binds directly to 16S rRNA central domain where it helps coordinate assembly of the platform of the 30S subunit. In Lactococcus lactis subsp. cremoris (strain MG1363), this protein is Small ribosomal subunit protein uS8.